Reading from the N-terminus, the 339-residue chain is Anthranilate phosphoribosyltransferase (339 aa).

5-phospho-alpha-D-ribose 1-diphosphate is bound by residues glycine 81, 84-85, serine 89, 91-94, 109-117, and alanine 121; these read GD, NVSS, and KHGNRALSS. Glycine 81 contributes to the anthranilate binding site. Serine 93 serves as a coordination point for Mg(2+). Asparagine 112 serves as a coordination point for anthranilate. Position 167 (arginine 167) interacts with anthranilate. Mg(2+)-binding residues include aspartate 225 and glutamate 226.

The protein belongs to the anthranilate phosphoribosyltransferase family. Homodimer. The cofactor is Mg(2+).

It carries out the reaction N-(5-phospho-beta-D-ribosyl)anthranilate + diphosphate = 5-phospho-alpha-D-ribose 1-diphosphate + anthranilate. It functions in the pathway amino-acid biosynthesis; L-tryptophan biosynthesis; L-tryptophan from chorismate: step 2/5. Catalyzes the transfer of the phosphoribosyl group of 5-phosphorylribose-1-pyrophosphate (PRPP) to anthranilate to yield N-(5'-phosphoribosyl)-anthranilate (PRA). This chain is Anthranilate phosphoribosyltransferase, found in Brucella suis biovar 1 (strain 1330).